Consider the following 144-residue polypeptide: Peptide methionine sulfoxide reductase MsrB (144 aa).

Positions 6–128 constitute a MsrB domain; that stretch reads KDELKKKLTP…NSAALRFIPK (123 aa). Catalysis depends on Cys117, which acts as the Nucleophile.

The protein belongs to the MsrB Met sulfoxide reductase family.

It carries out the reaction L-methionyl-[protein] + [thioredoxin]-disulfide + H2O = L-methionyl-(R)-S-oxide-[protein] + [thioredoxin]-dithiol. The sequence is that of Peptide methionine sulfoxide reductase MsrB from Shouchella clausii (strain KSM-K16) (Alkalihalobacillus clausii).